Reading from the N-terminus, the 138-residue chain is Small ribosomal subunit protein uS9 (138 aa).

Belongs to the universal ribosomal protein uS9 family.

The polypeptide is Small ribosomal subunit protein uS9 (rps9) (Sulfolobus acidocaldarius (strain ATCC 33909 / DSM 639 / JCM 8929 / NBRC 15157 / NCIMB 11770)).